A 413-amino-acid chain; its full sequence is Chloramphenicol efflux pump MT0201 (413 aa).

The next 12 membrane-spanning stretches (helical) occupy residues leucine 23–alanine 43, valine 55–proline 75, leucine 89–phenylalanine 109, alanine 110–isoleucine 130, isoleucine 150–leucine 170, leucine 176–leucine 196, valine 226–isoleucine 246, asparagine 256–alanine 276, alanine 286–phenylalanine 306, alanine 312–valine 332, glycine 353–leucine 373, and leucine 378–valine 398.

Belongs to the major facilitator superfamily.

It localises to the cell membrane. Its function is as follows. Active efflux pump that plays an important role in chloramphenicol resistance. The polypeptide is Chloramphenicol efflux pump MT0201 (Mycobacterium tuberculosis (strain CDC 1551 / Oshkosh)).